A 512-amino-acid chain; its full sequence is Multidrug resistance protein 3 (512 aa).

Helical transmembrane passes span 13–33 (FVVL…TIVA), 48–68 (KFAW…PIYG), 79–99 (FFLF…IAQT), 109–129 (IQGI…FDLF), 139–159 (GMFG…GAII), 163–183 (ISWH…LFFI), 200–220 (WGGA…LELG), 228–248 (SIQI…FFIV), 272–292 (ILAF…PIFV), 304–324 (GFIL…GGIF), 333–353 (LMLI…NMTP), 358–378 (VWLT…FSLL), 399–421 (SFLR…TNVF), and 475–495 (ITYV…TILF).

It belongs to the major facilitator superfamily. EmrB family.

The protein localises to the cell membrane. Confers resistance to puromycin, tosufloxacin and norfloxacin. The chain is Multidrug resistance protein 3 (bmr3) from Bacillus subtilis (strain 168).